We begin with the raw amino-acid sequence, 265 residues long: MTDAGKTARLNRISTDDRLLTIPMDHGITLGAIDGLVDIEATIREVTANGADAVLTQPGIAPRVHPNKGDAGYIVHLNASTTLGPDQTDKRRTGTVEDAVRAGADAVSFHINVGSDHEPDQITALADVAADADRLGVPVLAMAYARGPGVDEHDAANLGHAVRLAEEVGADVIKTAYSGSTESFQRVVDATAKPVIIAGGDPAGDRETLQGIRDAMDAGAAGVSTGRTVFQHATPGAMTAAISAVVHDDADPEAALARAGLVVDA.

Residue aspartate 25 is the Proton acceptor of the active site. Residues 25–29 and 144–146 each bind 1-deoxy-D-threo-hexo-2,5-diulose 6-phosphate; these read DHGIT and YAR. Residue tyrosine 144 is the Proton donor of the active site. Lysine 174 (schiff-base intermediate with substrate) is an active-site residue. 1-deoxy-D-threo-hexo-2,5-diulose 6-phosphate contacts are provided by residues 199–200 and 226–227; these read GG and GR.

This sequence belongs to the DeoC/FbaB aldolase family. ADHS subfamily. In terms of assembly, homodecamer.

It catalyses the reaction 1-deoxy-D-threo-hexo-2,5-diulose 6-phosphate + L-aspartate 4-semialdehyde = 2,3-dioxopropyl phosphate + 2-amino-2,3,7-trideoxy-D-lyxo-hept-6-ulosonate. Functionally, catalyzes a transaldol reaction between 6-deoxy-5-ketofructose 1-phosphate (DKFP) and L-aspartate semialdehyde (ASA) with an elimination of hydroxypyruvaldehyde phosphate to yield 2-amino-3,7-dideoxy-D-threo-hept-6-ulosonate (ADH). Plays a key role in an alternative pathway of the biosynthesis of 3-dehydroquinate (DHQ), which is involved in the canonical pathway for the biosynthesis of aromatic amino acids. This is 2-amino-3,7-dideoxy-D-threo-hept-6-ulosonate synthase from Halobacterium salinarum (strain ATCC 700922 / JCM 11081 / NRC-1) (Halobacterium halobium).